We begin with the raw amino-acid sequence, 624 residues long: MGHSPSRHNACGGGGGDGESPPSPLPSRFERFRRRLRLRHRDRAGRPGGDAHASESGTGRAIAVDEFAGIARIRIVKEKKVVVETNGPHIARISVFETNRFSKNTLVGYCEVDLFELLTKDLDEHSEVLSLLDPSSSATIVGSISISCYIEDPVETEQSFARRVLAIVDYNEDGELSLSEFSDLMKAFGNKLAVAKIEELFRQADKNGDGIVDMDELAALLANQQEKEPLISNCPVCGEILGKHDKINDMIHMTLCFDEGTGNQIMTGGFLTDKQASYGWMFKLSEWAHFSSYDVGLHSGSTASHILVFDRRTKRLVEEVIDGKIVLSMRALYQSKVGLTLIDTGVKDLLKNLSEKQGKKMSSPESAKDIPKFLELFKDQINLDEVKDPLESFKTFNEFFVRQLKPGARPIACYEQDTIATCAADSRLMTFSSVDESTRLWIKGRKFSIEGLLGKDVHSDALCNGSLVIFRLAPQDYHRFHVPVSGTLEKFVEIPGCLYTVNPIAVNSKYCNVFTENKRVVSIISTSEFGKVAFVAIGATMVGSIEFLKEEGDYVHKGDEFGYFAFGGSTVICVFEKDAIEFDADLLANSARSLETLVSVGMRLGVSTRNRDLQPQELEKCSLE.

A disordered region spans residues 1–30 (MGHSPSRHNACGGGGGDGESPPSPLPSRFE). Residues 16-129 (GDGESPPSPL…KDLDEHSEVL (114 aa)) enclose the C2 domain. 2 EF-hand domains span residues 156–191 (TEQS…FGNK) and 192–227 (LAVA…QQEK). Asp-169, Asn-171, Asp-173, Glu-175, Glu-180, Asp-205, Asn-207, Asp-209, and Glu-216 together coordinate Ca(2+). Catalysis depends on charge relay system; for autoendoproteolytic cleavage activity residues Asp-425, His-481, and Ser-569. Ser-569 serves as the catalytic Schiff-base intermediate with substrate; via pyruvic acid; for decarboxylase activity. Ser-569 is subject to Pyruvic acid (Ser); by autocatalysis.

Belongs to the phosphatidylserine decarboxylase family. PSD-B subfamily. Eukaryotic type II sub-subfamily. In terms of assembly, heterodimer of a large membrane-associated beta subunit and a small pyruvoyl-containing alpha subunit. It depends on pyruvate as a cofactor. Is synthesized initially as an inactive proenzyme. Formation of the active enzyme involves a self-maturation process in which the active site pyruvoyl group is generated from an internal serine residue via an autocatalytic post-translational modification. Two non-identical subunits are generated from the proenzyme in this reaction, and the pyruvate is formed at the N-terminus of the alpha chain, which is derived from the carboxyl end of the proenzyme. The autoendoproteolytic cleavage occurs by a canonical serine protease mechanism, in which the side chain hydroxyl group of the serine supplies its oxygen atom to form the C-terminus of the beta chain, while the remainder of the serine residue undergoes an oxidative deamination to produce ammonia and the pyruvoyl prosthetic group on the alpha chain. During this reaction, the Ser that is part of the protease active site of the proenzyme becomes the pyruvoyl prosthetic group, which constitutes an essential element of the active site of the mature decarboxylase.

Its subcellular location is the vacuole membrane. The protein localises to the endoplasmic reticulum membrane. The catalysed reaction is a 1,2-diacyl-sn-glycero-3-phospho-L-serine + H(+) = a 1,2-diacyl-sn-glycero-3-phosphoethanolamine + CO2. The protein operates within phospholipid metabolism; phosphatidylethanolamine biosynthesis; phosphatidylethanolamine from CDP-diacylglycerol: step 2/2. Catalyzes the formation of phosphatidylethanolamine (PtdEtn) from phosphatidylserine (PtdSer). Plays a central role in phospholipid metabolism and in the interorganelle trafficking of phosphatidylserine. The chain is Phosphatidylserine decarboxylase proenzyme 2 from Oryza sativa subsp. japonica (Rice).